We begin with the raw amino-acid sequence, 463 residues long: Ribosome biogenesis protein NSA1 (463 aa).

It belongs to the NSA1 family. As to quaternary structure, component of the pre-66S ribosomal particle. Interacts with NOP7, RRP1 and RRP5.

It is found in the nucleus. The protein localises to the nucleolus. Involved in the biogenesis of the 60S ribosomal subunit. The sequence is that of Ribosome biogenesis protein NSA1 (NSA1) from Saccharomyces cerevisiae (strain ATCC 204508 / S288c) (Baker's yeast).